Consider the following 217-residue polypeptide: MKLFIDTANINEIKEAYSWGIICGVTTNPSLIAKEGRDFKEVVNEICSIVDGPISAEVISLKAEGMIEEARDLAKIHKNVVIKIPMTTEGLKAVSVLSKEGIKTNVTLIFSAAQALLAAKAGATYVSPFVGRLDDIGQNGIELIKEIVQIFRNYPDIKTEIIAASIRHPIHVIEAAKAGADIATVPFKVLEQMTKHALTDIGIERFLKDWEKVPKKN.

Lysine 83 serves as the catalytic Schiff-base intermediate with substrate.

This sequence belongs to the transaldolase family. Type 3B subfamily.

Its subcellular location is the cytoplasm. It catalyses the reaction D-sedoheptulose 7-phosphate + D-glyceraldehyde 3-phosphate = D-erythrose 4-phosphate + beta-D-fructose 6-phosphate. It participates in carbohydrate degradation; pentose phosphate pathway; D-glyceraldehyde 3-phosphate and beta-D-fructose 6-phosphate from D-ribose 5-phosphate and D-xylulose 5-phosphate (non-oxidative stage): step 2/3. Its function is as follows. Transaldolase is important for the balance of metabolites in the pentose-phosphate pathway. The protein is Probable transaldolase of Caldicellulosiruptor saccharolyticus (strain ATCC 43494 / DSM 8903 / Tp8T 6331).